The sequence spans 454 residues: Histidine--tRNA ligase (454 aa).

It belongs to the class-II aminoacyl-tRNA synthetase family. Homodimer.

It localises to the cytoplasm. It carries out the reaction tRNA(His) + L-histidine + ATP = L-histidyl-tRNA(His) + AMP + diphosphate + H(+). The sequence is that of Histidine--tRNA ligase from Bacteroides fragilis (strain ATCC 25285 / DSM 2151 / CCUG 4856 / JCM 11019 / LMG 10263 / NCTC 9343 / Onslow / VPI 2553 / EN-2).